Here is a 107-residue protein sequence, read N- to C-terminus: UPF0122 protein STH1464 (107 aa).

It belongs to the UPF0122 family.

In terms of biological role, might take part in the signal recognition particle (SRP) pathway. This is inferred from the conservation of its genetic proximity to ftsY/ffh. May be a regulatory protein. This Symbiobacterium thermophilum (strain DSM 24528 / JCM 14929 / IAM 14863 / T) protein is UPF0122 protein STH1464.